The sequence spans 142 residues: Rhinocerosin (142 aa).

Positions 1 to 16 are cleaved as a signal peptide; it reads MMKLYIVFGFIAFSAA. Positions 17-70 are excised as a propeptide; sequence YVVPEGYYEPEYYPADGYESERVARASPAELIFDEDLADEPEVEEPQYYIRTRR. The interval 72-96 is disordered; the sequence is LQPGAPNFPMPGSQLPTSITSNIEK. Residues 85–96 are compositionally biased toward polar residues; the sequence is QLPTSITSNIEK.

The protein belongs to the coleoptericin family. As to expression, strongly expressed in the fat body and the Malpighian tubules, and weakly expressed in hemocytes and midgut.

It localises to the secreted. Its function is as follows. Has strong antibacterial activity against E.coli, Streptococcus pyogenes, Staphylococcus aureus but not against Pseudomonas aeruginosa. The polypeptide is Rhinocerosin (Oryctes rhinoceros (Coconut rhinoceros beetle)).